Here is a 333-residue protein sequence, read N- to C-terminus: Ketol-acid reductoisomerase (NADP(+)) (333 aa).

The KARI N-terminal Rossmann domain occupies 1–179 (MFYDDDADLT…GGTRAGVIKT (179 aa)). NADP(+)-binding positions include 22-25 (YGSQ), Lys-45, Ser-48, Ser-50, and 80-83 (DTAQ). Residue His-105 is part of the active site. Gly-131 contributes to the NADP(+) binding site. Residues 180-325 (TFKDETETDL…KRLRDLMSWV (146 aa)) enclose the KARI C-terminal knotted domain. Positions 188, 192, 224, and 228 each coordinate Mg(2+). Ser-249 contributes to the substrate binding site.

This sequence belongs to the ketol-acid reductoisomerase family. Requires Mg(2+) as cofactor.

The catalysed reaction is (2R)-2,3-dihydroxy-3-methylbutanoate + NADP(+) = (2S)-2-acetolactate + NADPH + H(+). It catalyses the reaction (2R,3R)-2,3-dihydroxy-3-methylpentanoate + NADP(+) = (S)-2-ethyl-2-hydroxy-3-oxobutanoate + NADPH + H(+). Its pathway is amino-acid biosynthesis; L-isoleucine biosynthesis; L-isoleucine from 2-oxobutanoate: step 2/4. The protein operates within amino-acid biosynthesis; L-valine biosynthesis; L-valine from pyruvate: step 2/4. Functionally, involved in the biosynthesis of branched-chain amino acids (BCAA). Catalyzes an alkyl-migration followed by a ketol-acid reduction of (S)-2-acetolactate (S2AL) to yield (R)-2,3-dihydroxy-isovalerate. In the isomerase reaction, S2AL is rearranged via a Mg-dependent methyl migration to produce 3-hydroxy-3-methyl-2-ketobutyrate (HMKB). In the reductase reaction, this 2-ketoacid undergoes a metal-dependent reduction by NADPH to yield (R)-2,3-dihydroxy-isovalerate. In Mycobacterium avium, this protein is Ketol-acid reductoisomerase (NADP(+)).